The sequence spans 147 residues: HTH-type transcriptional regulator MgrA (147 aa).

In terms of domain architecture, HTH marR-type spans 8–139 (KEQLCFSLYN…LNRLLGKVIH (132 aa)). Residues 55–78 (VKKVVTELALDTGTVSPLLKRMEQ) constitute a DNA-binding region (H-T-H motif).

It is found in the cytoplasm. Its function is as follows. Regulatory protein involved in autolytic activity, multidrug resistance and virulence. Controls autolysis by inactivating LytM, LytN (autolysins) and SarV (autolysis activator) and activating ArlRS, LrgAB and LytSR (autolysis inhibitors). Acts as a dual regulator for resistance to multiple drugs by inactivating NorB and tet38 and activating NorA. Positively controls the expression of virulence accessory gene regulator (agr) to promote alpha-hemolysin (hla) transcription and down-regulates staphylococcal accessory regulator (sarS), leading to repression of surface protein A (spa). Binds directly to hla promoter to augment its activation. Binds to sarS promoter to down-regulate spa expression. The sequence is that of HTH-type transcriptional regulator MgrA (mgrA) from Staphylococcus aureus (strain NCTC 8325 / PS 47).